We begin with the raw amino-acid sequence, 2082 residues long: Polyketide synthase ThaQ (2082 aa).

Residues Asn398 to Ala468 are disordered. Composition is skewed to basic and acidic residues over residues Asp399–Arg411, His419–Gln430, and Ala439–Ala468. Residues Ala470 to His546 enclose the Carrier 1 domain. Ser507 carries the post-translational modification O-(pantetheine 4'-phosphoryl)serine. Low complexity-rich tracts occupy residues Ala560–Pro582 and Asp593–Arg605. A disordered region spans residues Ala560–Asp655. Residues Pro606–Ala631 show a composition bias toward pro residues. The Ketosynthase family 3 (KS3) domain maps to Ala658–Glu1077. Disordered regions lie at residues Ala1250–Glu1269 and Ala1603–Asp1653. Composition is skewed to low complexity over residues Ala1256 to Glu1269 and Ser1612 to Ala1624. The span at Ala1640–Asp1653 shows a compositional bias: basic and acidic residues. The Carrier 2 domain maps to Ala1669 to Val1743. Ser1703 is modified (O-(pantetheine 4'-phosphoryl)serine). In terms of domain architecture, AB hydrolase-1 spans Pro1792–His2022. Residues Gly2045–Val2067 are compositionally biased toward low complexity. The segment at Gly2045–Ala2082 is disordered.

Pantetheine 4'-phosphate is required as a cofactor.

It is found in the cytoplasm. It functions in the pathway antibiotic biosynthesis. Functionally, involved in production of the polyketide antibiotic thailandamide. The chain is Polyketide synthase ThaQ from Burkholderia thailandensis (strain ATCC 700388 / DSM 13276 / CCUG 48851 / CIP 106301 / E264).